The sequence spans 304 residues: Acetylglutamate kinase (304 aa).

Residues 75–76, Arg97, and Asn196 contribute to the substrate site; that span reads GG.

Belongs to the acetylglutamate kinase family. ArgB subfamily.

It localises to the cytoplasm. It catalyses the reaction N-acetyl-L-glutamate + ATP = N-acetyl-L-glutamyl 5-phosphate + ADP. It participates in amino-acid biosynthesis; L-arginine biosynthesis; N(2)-acetyl-L-ornithine from L-glutamate: step 2/4. Catalyzes the ATP-dependent phosphorylation of N-acetyl-L-glutamate. In Corynebacterium urealyticum (strain ATCC 43042 / DSM 7109), this protein is Acetylglutamate kinase.